The sequence spans 682 residues: Potassium-transporting ATPase ATP-binding subunit (682 aa).

Helical transmembrane passes span 34-54, 62-82, 219-239, and 254-274; these read PVMF…IAMA, ALFS…ANFA, IALT…TATL, and VLVA…LSAI. Asp-307 serves as the catalytic 4-aspartylphosphate intermediate. ATP-binding positions include Asp-344, Glu-348, 377 to 384, and Lys-395; that span reads FTAQSRMS. Residues Asp-518 and Asp-522 each contribute to the Mg(2+) site. The next 3 helical transmembrane spans lie at 588-608, 616-636, and 656-676; these read FAII…LNIM, AILS…PLAL, and IYGL…DLLL.

This sequence belongs to the cation transport ATPase (P-type) (TC 3.A.3) family. Type IA subfamily. In terms of assembly, the system is composed of three essential subunits: KdpA, KdpB and KdpC.

It is found in the cell inner membrane. It carries out the reaction K(+)(out) + ATP + H2O = K(+)(in) + ADP + phosphate + H(+). Its function is as follows. Part of the high-affinity ATP-driven potassium transport (or Kdp) system, which catalyzes the hydrolysis of ATP coupled with the electrogenic transport of potassium into the cytoplasm. This subunit is responsible for energy coupling to the transport system and for the release of the potassium ions to the cytoplasm. The polypeptide is Potassium-transporting ATPase ATP-binding subunit (Shigella boydii serotype 18 (strain CDC 3083-94 / BS512)).